The primary structure comprises 1905 residues: Transport and Golgi organization protein 1 homolog (1905 aa).

Residues 1–22 form the signal peptide; sequence MAAAQGLLFWLLLLGPPCRVPG. Over 23–1141 the chain is Lumenal; the sequence is QPEQDPGRRF…EPASVTPLEN (1119 aa). The 63-residue stretch at 45-107 folds into the SH3 domain; it reads MLMYRGEALE…PKDLIQVVHE (63 aa). Basic and acidic residues predominate over residues 154-167; that stretch reads SEKVKEKTAQRVEE. Disordered regions lie at residues 154–259 and 313–621; these read SEKV…HEQE and TVGK…IKDR. An N-linked (GlcNAc...) asparagine glycan is attached at N173. The segment covering 173-190 has biased composition (acidic residues); sequence NESDAEPEPGEPNSEESE. Over residues 198-208 the composition is skewed to basic and acidic residues; the sequence is AELRERSEAQK. The span at 209–220 shows a compositional bias: polar residues; that stretch reads SHPQVNSQTGHA. 2 positions are modified to phosphoserine: S226 and S229. The span at 234–245 shows a compositional bias: basic and acidic residues; that stretch reads LQDKLKVPDSEN. N246 carries N-linked (GlcNAc...) asparagine glycosylation. Residues 246–255 show a composition bias toward polar residues; it reads NKTSNSSQVS. The span at 317–327 shows a compositional bias: acidic residues; the sequence is EEEENKEDFDE. 2 stretches are compositionally biased toward basic and acidic residues: residues 337–366 and 373–386; these read EDTKSPGHSGIEKHPTEKEQNSNKEHKVEE and KKGDKEIPKHREDT. Over residues 392 to 414 the composition is skewed to acidic residues; that stretch reads MEGEENTDTDLESSDSKEEDDPL. Composition is skewed to basic and acidic residues over residues 419–436 and 459–480; these read RLGKPRPEDHTDPEKAAD and HMKDKGRKVEEPRRDWVQHEVG. Positions 467 to 527 form a coiled coil; that stretch reads VEEPRRDWVQ…ANQENDLKGA (61 aa). Positions 488–500 are enriched in polar residues; it reads DQAVQGSSQSGHL. Positions 531–542 are enriched in basic and acidic residues; the sequence is ISKEMLHEEKPS. N627 carries N-linked (GlcNAc...) asparagine glycosylation. Disordered stretches follow at residues 657-908, 1036-1059, and 1085-1118; these read QQGG…PHAP, APPAAAQPVEGGWDGPAEDTQPPL, and PVTRDMGTSGVAQKPQTEEDGDPGIITPQGTPVD. Residues 669–714 show a composition bias toward basic and acidic residues; that stretch reads VSEKRELPEEEVTRVTKDASDEGQEVRKTGQTDSIEGRGFRPKEPN. Acidic residues predominate over residues 715-730; that stretch reads PEDEDYSPEELLEDEN. Composition is skewed to basic and acidic residues over residues 736 to 751, 766 to 789, 842 to 859, and 868 to 884; these read QSKERSPEIQDKRLDV, TDPETEKNKEETRHVSENERKNET, SQKKDPDYLKEDNHEGHP, and PGVEPSKEDDEHAEKFV. Phosphoserine is present on S873. The stretch at 1142–1162 is an intramembrane region; that stretch reads AIAFIYSLVFHLTKTLLATLP. The Lumenal segment spans residues 1163 to 1173; that stretch reads DDVQPGPDFYG. A helical membrane pass occupies residues 1174 to 1194; it reads LPWKPVLITASLGIVSFAVFF. Residues 1195–1905 are Cytoplasmic-facing; sequence WRTVLAVKSR…DCSPALKQSP (711 aa). The tract at residues 1208–1647 is mediates interaction with MIA2; sequence VTEQQISEKL…VIVKPMPGRP (440 aa). The stretch at 1211–1393 forms a coiled coil; the sequence is QQISEKLKNI…SQKDLEVALT (183 aa). The segment at 1416-1443 is disordered; it reads SESEDQNKGGSESDELANGEVGGDRSEK. S1428 carries the phosphoserine modification. Residues 1484–1636 adopt a coiled-coil conformation; the sequence is NLEDQIKKLE…TQKMAMMQEE (153 aa). A disordered region spans residues 1639 to 1905; sequence IVKPMPGRPN…DCSPALKQSP (267 aa). The span at 1647–1664 shows a compositional bias: polar residues; that stretch reads PNTQNPPRRGPLSQNGSF. Phosphoserine occurs at positions 1663, 1675, 1703, 1724, 1738, and 1742. A proline-rich domain (PRD); mediates interaction with the COPII coat subunits SEC23A and SEC23B region spans residues 1748-1905; sequence DEGKVSMAAK…DCSPALKQSP (158 aa). Positions 1776-1806 are enriched in pro residues; that stretch reads LLPPIRYGPPPQLCGPFGPRPLPPPFGPGMR. R1781 bears the Asymmetric dimethylarginine mark. Residues 1785-1845 form an SEC16A-interacting region (SIR); required for its localization to endoplasmic reticulum exit sites and for its interaction with SEC16A region; sequence PPQLCGPFGP…GHAPFRPLGS (61 aa). Residues 1821 to 1831 show a composition bias toward basic and acidic residues; that stretch reads GKRDLPLDPRE. Phosphoserine is present on residues S1890 and S1904. Residues 1891–1905 show a composition bias toward polar residues; it reads QGASQDCSPALKQSP.

Belongs to the MIA/OTOR family. Tango1 subfamily. In terms of assembly, interacts with MIA2. Interacts (via SH3 domain) with COL7A1. Interacts with the COPII coat subunits SEC23A, SEC23B and maybe SEC24C. May interact with APOB and MIA2. Interacts with SEC16A.

The protein resides in the endoplasmic reticulum membrane. Its function is as follows. Plays a role in the transport of cargos that are too large to fit into COPII-coated vesicles and require specific mechanisms to be incorporated into membrane-bound carriers and exported from the endoplasmic reticulum. This protein is required for collagen VII (COL7A1) secretion by loading COL7A1 into transport carriers. It may participate in cargo loading of COL7A1 at endoplasmic reticulum exit sites by binding to COPII coat subunits Sec23/24 and guiding SH3-bound COL7A1 into a growing carrier. Does not play a role in global protein secretion and is apparently specific to COL7A1 cargo loading. However, it may participate in secretion of other proteins in cells that do not secrete COL7A1. It is also specifically required for the secretion of lipoproteins by participating in their export from the endoplasmic reticulum. Required for correct assembly of COPII coat components at endoplasmic reticulum exit sites (ERES) and for the localization of SEC16A and membrane-bound ER-resident complexes consisting of MIA2 and PREB/SEC12 to ERES. The protein is Transport and Golgi organization protein 1 homolog of Bos taurus (Bovine).